The following is a 166-amino-acid chain: Large ribosomal subunit protein uL10 (166 aa).

The protein belongs to the universal ribosomal protein uL10 family. In terms of assembly, part of the ribosomal stalk of the 50S ribosomal subunit. The N-terminus interacts with L11 and the large rRNA to form the base of the stalk. The C-terminus forms an elongated spine to which L12 dimers bind in a sequential fashion forming a multimeric L10(L12)X complex.

Functionally, forms part of the ribosomal stalk, playing a central role in the interaction of the ribosome with GTP-bound translation factors. The chain is Large ribosomal subunit protein uL10 from Shouchella clausii (strain KSM-K16) (Alkalihalobacillus clausii).